Here is a 273-residue protein sequence, read N- to C-terminus: Urease accessory protein UreD (273 aa).

The protein belongs to the UreD family. As to quaternary structure, ureD, UreF and UreG form a complex that acts as a GTP-hydrolysis-dependent molecular chaperone, activating the urease apoprotein by helping to assemble the nickel containing metallocenter of UreC. The UreE protein probably delivers the nickel.

The protein resides in the cytoplasm. Functionally, required for maturation of urease via the functional incorporation of the urease nickel metallocenter. The chain is Urease accessory protein UreD from Rhizobium johnstonii (strain DSM 114642 / LMG 32736 / 3841) (Rhizobium leguminosarum bv. viciae).